Consider the following 351-residue polypeptide: Histidinol-phosphate aminotransferase (351 aa).

Residues 1–26 (MRFRAELEPLSPYNPPRASQEAAAER) form a disordered region. Residue K223 is modified to N6-(pyridoxal phosphate)lysine.

It belongs to the class-II pyridoxal-phosphate-dependent aminotransferase family. Histidinol-phosphate aminotransferase subfamily. As to quaternary structure, homodimer. Pyridoxal 5'-phosphate is required as a cofactor.

It carries out the reaction L-histidinol phosphate + 2-oxoglutarate = 3-(imidazol-4-yl)-2-oxopropyl phosphate + L-glutamate. The protein operates within amino-acid biosynthesis; L-histidine biosynthesis; L-histidine from 5-phospho-alpha-D-ribose 1-diphosphate: step 7/9. The protein is Histidinol-phosphate aminotransferase of Rubrobacter xylanophilus (strain DSM 9941 / JCM 11954 / NBRC 16129 / PRD-1).